We begin with the raw amino-acid sequence, 127 residues long: Small ribosomal subunit protein eS6 (127 aa).

The protein belongs to the eukaryotic ribosomal protein eS6 family.

The protein is Small ribosomal subunit protein eS6 of Picrophilus torridus (strain ATCC 700027 / DSM 9790 / JCM 10055 / NBRC 100828 / KAW 2/3).